We begin with the raw amino-acid sequence, 213 residues long: Large ribosomal subunit protein mL67 (213 aa).

This sequence belongs to the mitochondrion-specific ribosomal protein mL67 family.

Its subcellular location is the nucleus. It is found in the mitochondrion. Its function is as follows. Transcription factor involved in regulation of RNA polymerase II-dependent transcription. Also involved in regulation of mitochondrial DNA recombination, maintenance and repair, and generation of homoplasmic cells. This is Large ribosomal subunit protein mL67 (MHR1) from Eremothecium gossypii (strain ATCC 10895 / CBS 109.51 / FGSC 9923 / NRRL Y-1056) (Yeast).